The sequence spans 502 residues: Vicilin Jug r 6.0101 (502 aa).

The first 27 residues, 1-27 (MAFKPKIPIALLLLTSLLAICAGLALA), serve as a signal peptide directing secretion. Over residues 67 to 84 (ARERAERRRSEEGSSREE) the composition is skewed to basic and acidic residues. Residues 67-100 (ARERAERRRSEEGSSREEGYEEEELGGEREEENP) are disordered. Residues 85–100 (GYEEEELGGEREEENP) show a composition bias toward acidic residues. Cupin type-1 domains lie at 101-259 (YVFE…DQLE) and 302-475 (FNLF…REVE). Asn-340 carries N-linked (GlcNAc...) asparagine glycosylation. A disordered region spans residues 374–401 (HLSSSGSRGQREGSGSSRRRSRSGPSYQ). Positions 376 to 389 (SSSGSRGQREGSGS) are enriched in low complexity.

This sequence belongs to the 7S seed storage protein family. In terms of assembly, homotrimer. Post-translationally, N-glycosylated; paucimannose-type structures containing xylose. Expressed in seed (at protein level).

Seed storage protein. This is Vicilin Jug r 6.0101 from Juglans regia (English walnut).